The following is a 214-amino-acid chain: Galactokinase (214 aa).

Positions 47, 53, 54, and 56 each coordinate alpha-D-galactose. ATP-binding residues include G149, G151, S153, and S154. D199 lines the alpha-D-galactose pocket. The Proton acceptor role is filled by D199.

This sequence belongs to the GHMP kinase family. GalK subfamily.

The catalysed reaction is alpha-D-galactose + ATP = alpha-D-galactose 1-phosphate + ADP + H(+). It participates in carbohydrate metabolism; galactose metabolism. In terms of biological role, galactokinase is a key enzyme in the galactose metabolism where it catalyzes the conversion of alpha-D-galactose to galactose 1-phosphate. Can also induce the transcription of the gal genes in response to the organism being challenged with galactose as the sole source of carbon. This Candida maltosa (Yeast) protein is Galactokinase.